The chain runs to 82 residues: Small ribosomal subunit protein uS17 (82 aa).

It belongs to the universal ribosomal protein uS17 family. In terms of assembly, part of the 30S ribosomal subunit.

One of the primary rRNA binding proteins, it binds specifically to the 5'-end of 16S ribosomal RNA. This Tolumonas auensis (strain DSM 9187 / NBRC 110442 / TA 4) protein is Small ribosomal subunit protein uS17.